The chain runs to 211 residues: FMN-dependent NADH:quinone oxidoreductase (211 aa).

An FMN-binding site is contributed by 17-19 (SYS).

The protein belongs to the azoreductase type 1 family. In terms of assembly, homodimer. It depends on FMN as a cofactor.

The catalysed reaction is 2 a quinone + NADH + H(+) = 2 a 1,4-benzosemiquinone + NAD(+). The enzyme catalyses N,N-dimethyl-1,4-phenylenediamine + anthranilate + 2 NAD(+) = 2-(4-dimethylaminophenyl)diazenylbenzoate + 2 NADH + 2 H(+). Its function is as follows. Quinone reductase that provides resistance to thiol-specific stress caused by electrophilic quinones. Also exhibits azoreductase activity. Catalyzes the reductive cleavage of the azo bond in aromatic azo compounds to the corresponding amines. The chain is FMN-dependent NADH:quinone oxidoreductase from Bacillus pumilus (strain SAFR-032).